Here is a 304-residue protein sequence, read N- to C-terminus: Non-specific ribonucleoside hydrolase RihC (304 aa).

His-235 is a catalytic residue.

This sequence belongs to the IUNH family. RihC subfamily.

Hydrolyzes both purine and pyrimidine ribonucleosides with a broad-substrate specificity. The polypeptide is Non-specific ribonucleoside hydrolase RihC (Salmonella paratyphi A (strain ATCC 9150 / SARB42)).